Here is a 762-residue protein sequence, read N- to C-terminus: Multifunctional tryptophan biosynthesis protein (762 aa).

Residues 25 to 224 form the Glutamine amidotransferase type-1 domain; the sequence is NLILIDNYDS…LHMQGGTWAE (200 aa). An L-glutamine-binding site is contributed by 76-78; the sequence is GPG. The active-site Nucleophile; for GATase activity is C104. L-glutamine-binding positions include Q108 and 154 to 155; that span reads SL. Catalysis depends on for GATase activity residues H198 and E200. An indole-3-glycerol phosphate synthase region spans residues 251–515; that stretch reads ILQKIYAHRK…DATQFIRELC (265 aa). The interval 531–762 is N-(5'-phosphoribosyl)anthranilate isomerase; it reads LVKICGTRSA…EFVKAAKSVR (232 aa).

As to quaternary structure, tetramer of two components I and two components II.

The catalysed reaction is chorismate + L-glutamine = anthranilate + pyruvate + L-glutamate + H(+). It catalyses the reaction N-(5-phospho-beta-D-ribosyl)anthranilate = 1-(2-carboxyphenylamino)-1-deoxy-D-ribulose 5-phosphate. It carries out the reaction 1-(2-carboxyphenylamino)-1-deoxy-D-ribulose 5-phosphate + H(+) = (1S,2R)-1-C-(indol-3-yl)glycerol 3-phosphate + CO2 + H2O. The protein operates within amino-acid biosynthesis; L-tryptophan biosynthesis; L-tryptophan from chorismate: step 1/5. It participates in amino-acid biosynthesis; L-tryptophan biosynthesis; L-tryptophan from chorismate: step 3/5. It functions in the pathway amino-acid biosynthesis; L-tryptophan biosynthesis; L-tryptophan from chorismate: step 4/5. Its function is as follows. Trifunctional enzyme bearing the Gln amidotransferase (GATase) domain of anthranilate synthase, indole-glycerolphosphate synthase, and phosphoribosylanthranilate isomerase activities. The polypeptide is Multifunctional tryptophan biosynthesis protein (trp-1) (Neurospora crassa (strain ATCC 24698 / 74-OR23-1A / CBS 708.71 / DSM 1257 / FGSC 987)).